The sequence spans 301 residues: Probable 2-dehydro-3-deoxy-D-pentonate aldolase YjhH (301 aa).

Active-site charge relay system residues include threonine 46 and tyrosine 109. The active-site Proton donor is the tyrosine 135. Lysine 164 serves as the catalytic Schiff-base intermediate with substrate.

The protein belongs to the DapA family.

The protein localises to the cytoplasm. The enzyme catalyses 2-dehydro-3-deoxy-D-arabinonate = glycolaldehyde + pyruvate. In terms of biological role, functions as a 2-dehydro-3-deoxy-D-pentonate aldolase. The chain is Probable 2-dehydro-3-deoxy-D-pentonate aldolase YjhH (yjhH) from Escherichia coli (strain K12).